We begin with the raw amino-acid sequence, 473 residues long: DNA (cytosine-5)-methyltransferase DRM1A (473 aa).

Residues 20 to 61 (SAPSALVAYFLGMGFSREMVFRAIKEIGDTDSEQILELLLTY) enclose the UBA 1 domain. The segment covering 84–101 (EEEDEEEDVNWDEDDTVD) has biased composition (acidic residues). The segment at 84 to 115 (EEEDEEEDVNWDEDDTVDNFDRATYSDGSGDE) is disordered. The region spanning 120-140 (EMSEKDEKIKSLVSMGFPEDE) is the UBA 2 domain. Residues 204–431 (VHRNLPDQAL…DSVKTIMASI (228 aa)) form the SAM-dependent MTase DRM-type domain.

It belongs to the class I-like SAM-binding methyltransferase superfamily. DRM-methyltransferase family.

The protein localises to the nucleus. The catalysed reaction is a 2'-deoxycytidine in DNA + S-adenosyl-L-methionine = a 5-methyl-2'-deoxycytidine in DNA + S-adenosyl-L-homocysteine + H(+). In terms of biological role, involved in de novo DNA methylation. Involved in RNA-directed DNA methylation (RdDM). The protein is DNA (cytosine-5)-methyltransferase DRM1A of Oryza sativa subsp. japonica (Rice).